The sequence spans 276 residues: Undecaprenyl-diphosphatase (276 aa).

7 consecutive transmembrane segments (helical) span residues 48 to 68 (AANS…AIVF), 92 to 112 (LSIA…FLFE), 119 to 139 (LFSV…MLFA), 155 to 175 (ISYK…WPGF), 196 to 216 (ADFT…LSLV), 225 to 245 (DLMP…LFVV), and 255 to 275 (IKLV…LLIM).

Belongs to the UppP family.

Its subcellular location is the cell membrane. It catalyses the reaction di-trans,octa-cis-undecaprenyl diphosphate + H2O = di-trans,octa-cis-undecaprenyl phosphate + phosphate + H(+). In terms of biological role, catalyzes the dephosphorylation of undecaprenyl diphosphate (UPP). Confers resistance to bacitracin. The protein is Undecaprenyl-diphosphatase of Bacillus subtilis (strain 168).